The following is a 61-amino-acid chain: Bacteriocin mesentericin Y105 (61 aa).

The first 24 residues, 1–24 (MTNMKSVEAYQQLDNQNLKKVVGG), serve as a signal peptide directing secretion. Cysteines 33 and 38 form a disulfide.

It belongs to the bacteriocin class IIA/YGNGV family.

The protein localises to the secreted. Functionally, bacteriocin active against Listeria monocytogenes. This chain is Bacteriocin mesentericin Y105 (mesY), found in Leuconostoc mesenteroides.